A 605-amino-acid chain; its full sequence is MTALDGIEGLSECIGRAIQEHLARSNLNLAWPQIDSLDRPILRFEAFIEDAGAVSTVASRSEKIASRTLDLTGMKTPQPSRSPTVTRNVATPHAEALHDRDDQESADDDDDDLQDDAAAQTASRKGTGGLRVANSQLIREDLSENQRQMQVDSRTFPKRRKVASEKFVFQPSTLDKLIIGIWEQAIFEQFQVAPNSVSSVVRHAPMDAAPVALSVTTEPSGGSFSQMNVFCRKVTQASRVCRSIEIIVQARWTELFEEQVQARTAAHPELSSTKHRKGVFMEACQDFGWSEKELRNKMAIWRGYKDVKDAAGWAALVFAGMGIYRFCKYRVGFDKEAMRRLKNLRNRLEVAADTLHPHWRQLLAIVGEPQALKYPGHPHEWVVYEDGSDPVPLRQTYIEHDPFFSFEHIEESVVDGSVWGCEDPRWMPQESAITRASGTYMCALCNEQQSDEPKLNACFCFPSLFGCVKRKPPPVQIYRTAEGKNNGLIALTAFERGTAVGELVGLITNGVRHLDVMEGSTPLAKYQIWQGREGNYTRFANHSCKANAQTSNFTWLDTQRVILVSKGIEAGSEITVDYGDKYWAGLDKSCLCGETCCRYKRDGRR.

The interval 68–132 (TLDLTGMKTP…SRKGTGGLRV (65 aa)) is disordered. A compositionally biased stretch (polar residues) spans 75–89 (KTPQPSRSPTVTRNV). Acidic residues predominate over residues 104–115 (ESADDDDDDLQD). The SET domain occupies 473–579 (PPVQIYRTAE…AGSEITVDYG (107 aa)).

The protein belongs to the class V-like SAM-binding methyltransferase superfamily.

This chain is SET domain-containing protein SNOG_11806, found in Phaeosphaeria nodorum (strain SN15 / ATCC MYA-4574 / FGSC 10173) (Glume blotch fungus).